Here is a 452-residue protein sequence, read N- to C-terminus: Probable 1,4-beta-D-glucan cellobiohydrolase A (452 aa).

A signal peptide spans 1–17; that stretch reads MHQRALLFSALLTAVRA. Asn-62 carries N-linked (GlcNAc...) asparagine glycosylation. The active-site Nucleophile is the Glu-227. Glu-232 functions as the Proton donor in the catalytic mechanism. N-linked (GlcNAc...) asparagine glycosylation is found at Asn-285, Asn-335, Asn-402, and Asn-445.

It belongs to the glycosyl hydrolase 7 (cellulase C) family.

It localises to the secreted. It carries out the reaction Hydrolysis of (1-&gt;4)-beta-D-glucosidic linkages in cellulose and cellotetraose, releasing cellobiose from the non-reducing ends of the chains.. In terms of biological role, the biological conversion of cellulose to glucose generally requires three types of hydrolytic enzymes: (1) Endoglucanases which cut internal beta-1,4-glucosidic bonds; (2) Exocellobiohydrolases that cut the disaccharide cellobiose from the non-reducing end of the cellulose polymer chain; (3) Beta-1,4-glucosidases which hydrolyze the cellobiose and other short cello-oligosaccharides to glucose. In Aspergillus niger (strain ATCC MYA-4892 / CBS 513.88 / FGSC A1513), this protein is Probable 1,4-beta-D-glucan cellobiohydrolase A (cbhA).